The sequence spans 290 residues: MDYKHFKGVHANIVIEVISLLEKGVKKAQEILEKPDAGSYTKLENSSGDTPIKADLALDKFLEENFLSLENVKSVFSEEKEKPVTKENGSYLIAYDPLDGSSVMEANFLVGTIIGIYEKDYKAHNLAASLYVVFGHKIELVVALDQVYRYAFYQNKFHFIETIALENKGKIVASGGNQKDFSMGLKKALEGFFTENYRLRYSGSMVADVHHVLIKKGGVFSYPQKKLRKLFEVFPLALIIEKAKGEAFYFDKGVKKRLLDQGVESYHEKSECYLTSQHEAQILEKYLKGE.

Mg(2+) contacts are provided by E78, D96, L98, and D99. Residues 99–102 (DGSS), Y201, and K226 contribute to the substrate site. Position 232 (E232) interacts with Mg(2+).

The protein belongs to the FBPase class 1 family. As to quaternary structure, homotetramer. The cofactor is Mg(2+).

It is found in the cytoplasm. The enzyme catalyses beta-D-fructose 1,6-bisphosphate + H2O = beta-D-fructose 6-phosphate + phosphate. Its pathway is carbohydrate biosynthesis; gluconeogenesis. This is Fructose-1,6-bisphosphatase class 1 from Helicobacter acinonychis (strain Sheeba).